We begin with the raw amino-acid sequence, 467 residues long: Gamma-aminobutyric acid receptor subunit gamma-3 (467 aa).

The N-terminal stretch at 1 to 17 (MAAKLLLLLCLFSGLHA) is a signal peptide. The Extracellular portion of the chain corresponds to 18–256 (RSRRVEEDEN…FELSRRMGYF (239 aa)). Asn-110 carries an N-linked (GlcNAc...) asparagine glycan. Cysteines 171 and 185 form a disulfide. N-linked (GlcNAc...) asparagine glycosylation is present at Asn-228. A helical membrane pass occupies residues 257 to 277 (TIQTYIPCILTVVLSWVSFWI). Residues 278-283 (KKDATP) are Cytoplasmic-facing. A helical transmembrane segment spans residues 284–303 (ARTTLGITTVLTMTTLSTIA). The Extracellular portion of the chain corresponds to 304-311 (RKSLPRVS). The helical transmembrane segment at 312–332 (YVTAMDLFVTVCFLFVFAALM) threads the bilayer. Topologically, residues 333–446 (EYATLNYYSS…DVSELDSYSR (114 aa)) are cytoplasmic. The chain crosses the membrane as a helical span at residues 447-467 (VFFPTSFLLFNLVYWVGYLYL).

Belongs to the ligand-gated ion channel (TC 1.A.9) family. Gamma-aminobutyric acid receptor (TC 1.A.9.5) subfamily. GABRG3 sub-subfamily. As to quaternary structure, heteropentamer, formed by a combination of alpha (GABRA1-6), beta (GABRB1-3), gamma (GABRG1-3), delta (GABRD), epsilon (GABRE), rho (GABRR1-3), pi (GABRP) and theta (GABRQ) chains, each subunit exhibiting distinct physiological and pharmacological properties. Post-translationally, may be palmitoylated. As to expression, expressed in brain.

It localises to the postsynaptic cell membrane. The protein localises to the cell membrane. The enzyme catalyses chloride(in) = chloride(out). Functionally, gamma subunit of the heteropentameric ligand-gated chloride channel gated by gamma-aminobutyric acid (GABA), a major inhibitory neurotransmitter in the brain. GABA-gated chloride channels, also named GABA(A) receptors (GABAAR), consist of five subunits arranged around a central pore and contain GABA active binding site(s) located at the alpha and beta subunit interface(s). When activated by GABA, GABAARs selectively allow the flow of chloride across the cell membrane down their electrochemical gradient. The chain is Gamma-aminobutyric acid receptor subunit gamma-3 from Mus musculus (Mouse).